Consider the following 607-residue polypeptide: Frizzled and smoothened-like protein J (607 aa).

An N-terminal signal peptide occupies residues 1 to 26; sequence MVSNKNLLPIIYIFFIILYFGDVAKS. Topologically, residues 27-247 are extracellular; it reads QYFPLDKGAT…QWRNIYRLSD (221 aa). The FZ domain maps to 32–182; the sequence is DKGATCQKYR…LSYTNTCENT (151 aa). 3 disulfides stabilise this stretch: cysteine 37–cysteine 108, cysteine 50–cysteine 101, and cysteine 127–cysteine 179. 6 N-linked (GlcNAc...) asparagine glycosylation sites follow: asparagine 63, asparagine 133, asparagine 155, asparagine 164, asparagine 190, and asparagine 222. A helical membrane pass occupies residues 248–268; that stretch reads VLSILSCILTLFLVITLGIIN. The Cytoplasmic portion of the chain corresponds to 269–276; that stretch reads PKVSRFDK. A helical membrane pass occupies residues 277–297; it reads INVMLLSSIFLQAFSGALMTF. An N-linked (GlcNAc...) asparagine glycan is attached at asparagine 298. Topologically, residues 298–330 are extracellular; sequence NGTENTLCPEDGRFASYIDRMCVATGFLLHGSS. Residues 331-351 form a helical membrane-spanning segment; sequence LLVVQWWCVLSFEVWFTIFQV. Residues 352-358 lie on the Cytoplasmic side of the membrane; the sequence is GKKQKDR. The helical transmembrane segment at 359 to 379 threads the bilayer; sequence FIYYLVASLIIAWIPPIVSIS. Over 380–401 the chain is Extracellular; the sequence is KNEYSGGPANPFCWLTTFNYRR. Residues 402-422 traverse the membrane as a helical segment; that stretch reads FAFWLPMGIFLCLGGVFLILL. Topologically, residues 423 to 451 are cytoplasmic; it reads MREIYVIVSGNVQSTKESRFKVLKMEAKP. A helical membrane pass occupies residues 452–472; it reads IISLIMYFSCLLYLFIYDQWI. Topologically, residues 473–508 are extracellular; sequence NNHMHVYTDSIPSYALCLLTSTSTNDCLLKAPDITG. A helical membrane pass occupies residues 509–529; sequence LGYFIYSIRVFGVYAFIIYGI. Topologically, residues 530–607 are cytoplasmic; that stretch reads SKKTLQIWKY…VELDSNSDAL (78 aa). Positions 532 to 537 match the Lys-Thr-X-X-X-Trp motif, mediates interaction with the PDZ domain of Dvl family members motif; sequence KTLQIW. Low complexity predominate over residues 559–575; the sequence is TAKSSNSNNSSTTNNIS. The tract at residues 559-607 is disordered; that stretch reads TAKSSNSNNSSTTNNISVKASSNMEYETRQENENGDSQSVELDSNSDAL. Residues 593–607 show a composition bias toward polar residues; sequence GDSQSVELDSNSDAL.

Belongs to the G-protein coupled receptor Fz/Smo family.

It is found in the membrane. This chain is Frizzled and smoothened-like protein J (fslJ-1), found in Dictyostelium discoideum (Social amoeba).